We begin with the raw amino-acid sequence, 302 residues long: 1D-myo-inositol 2-acetamido-2-deoxy-alpha-D-glucopyranoside deacetylase (302 aa).

Histidine 12, aspartate 15, and histidine 147 together coordinate Zn(2+).

The protein belongs to the MshB deacetylase family. Zn(2+) is required as a cofactor.

The enzyme catalyses 1D-myo-inositol 2-acetamido-2-deoxy-alpha-D-glucopyranoside + H2O = 1D-myo-inositol 2-amino-2-deoxy-alpha-D-glucopyranoside + acetate. Catalyzes the deacetylation of 1D-myo-inositol 2-acetamido-2-deoxy-alpha-D-glucopyranoside (GlcNAc-Ins) in the mycothiol biosynthesis pathway. The chain is 1D-myo-inositol 2-acetamido-2-deoxy-alpha-D-glucopyranoside deacetylase from Thermobispora bispora (strain ATCC 19993 / DSM 43833 / CBS 139.67 / JCM 10125 / KCTC 9307 / NBRC 14880 / R51).